Reading from the N-terminus, the 517-residue chain is Crotonobetaine/carnitine--CoA ligase (517 aa).

This sequence belongs to the ATP-dependent AMP-binding enzyme family.

The enzyme catalyses 4-(trimethylamino)butanoate + ATP + CoA = 4-(trimethylamino)butanoyl-CoA + AMP + diphosphate. It catalyses the reaction crotonobetaine + ATP + CoA = crotonobetainyl-CoA + AMP + diphosphate. The catalysed reaction is (R)-carnitine + ATP + CoA = (R)-carnitinyl-CoA + AMP + diphosphate. Its pathway is amine and polyamine metabolism; carnitine metabolism. Its function is as follows. Catalyzes the transfer of CoA to carnitine, generating the initial carnitinyl-CoA needed for the CaiB reaction cycle. Also has activity toward crotonobetaine and gamma-butyrobetaine. This chain is Crotonobetaine/carnitine--CoA ligase, found in Salmonella paratyphi C (strain RKS4594).